We begin with the raw amino-acid sequence, 327 residues long: Phenylalanine--tRNA ligase alpha subunit (327 aa).

Glu252 is a Mg(2+) binding site.

Belongs to the class-II aminoacyl-tRNA synthetase family. Phe-tRNA synthetase alpha subunit type 1 subfamily. In terms of assembly, tetramer of two alpha and two beta subunits. Requires Mg(2+) as cofactor.

It localises to the cytoplasm. The enzyme catalyses tRNA(Phe) + L-phenylalanine + ATP = L-phenylalanyl-tRNA(Phe) + AMP + diphosphate + H(+). The chain is Phenylalanine--tRNA ligase alpha subunit from Hamiltonella defensa subsp. Acyrthosiphon pisum (strain 5AT).